A 174-amino-acid chain; its full sequence is Peptidyl-prolyl cis-trans isomerase D, mitochondrial (174 aa).

In terms of domain architecture, PPIase cyclophilin-type spans 10–173 (FFQIKQGNTP…AACVIEDCGQ (164 aa)).

It belongs to the cyclophilin-type PPIase family. PPIase D subfamily.

The protein resides in the mitochondrion. The catalysed reaction is [protein]-peptidylproline (omega=180) = [protein]-peptidylproline (omega=0). Binds cyclosporin A (CsA). CsA mediates some of its effects via an inhibitory action on PPIase. Its function is as follows. PPIases accelerate the folding of proteins. It catalyzes the cis-trans isomerization of proline imidic peptide bonds in oligopeptides. The chain is Peptidyl-prolyl cis-trans isomerase D, mitochondrial (cypD) from Dictyostelium discoideum (Social amoeba).